The sequence spans 119 residues: Ribosome-binding factor A (119 aa).

It belongs to the RbfA family. As to quaternary structure, monomer. Binds 30S ribosomal subunits, but not 50S ribosomal subunits or 70S ribosomes.

It localises to the cytoplasm. Functionally, one of several proteins that assist in the late maturation steps of the functional core of the 30S ribosomal subunit. Associates with free 30S ribosomal subunits (but not with 30S subunits that are part of 70S ribosomes or polysomes). Required for efficient processing of 16S rRNA. May interact with the 5'-terminal helix region of 16S rRNA. The protein is Ribosome-binding factor A of Geobacter sp. (strain M21).